A 434-amino-acid chain; its full sequence is ATP-dependent protease ATPase subunit HslU (434 aa).

ATP is bound by residues I18, 60–65, D247, E312, and R384; that span reads GVGKTE.

It belongs to the ClpX chaperone family. HslU subfamily. As to quaternary structure, a double ring-shaped homohexamer of HslV is capped on each side by a ring-shaped HslU homohexamer. The assembly of the HslU/HslV complex is dependent on binding of ATP.

It localises to the cytoplasm. In terms of biological role, ATPase subunit of a proteasome-like degradation complex; this subunit has chaperone activity. The binding of ATP and its subsequent hydrolysis by HslU are essential for unfolding of protein substrates subsequently hydrolyzed by HslV. HslU recognizes the N-terminal part of its protein substrates and unfolds these before they are guided to HslV for hydrolysis. The polypeptide is ATP-dependent protease ATPase subunit HslU (Sinorhizobium fredii (strain NBRC 101917 / NGR234)).